Consider the following 837-residue polypeptide: Striatin-interacting protein 1 (837 aa).

Methionine 1 bears the N-acetylmethionine mark. 2 disordered regions span residues 1 to 67 and 333 to 423; these read MEPA…ESPD and AASP…KGLP. Residues 18 to 35 show a composition bias toward pro residues; it reads PQPPPPPPPAAAQPPPGA. The segment covering 36–46 has biased composition (low complexity); it reads PRAAAGLLPGG. Over residues 47–60 the composition is skewed to basic and acidic residues; sequence KAREFNRNQRKDSE. Residues serine 59, serine 335, and serine 339 each carry the phosphoserine modification. Positions 356-377 are enriched in basic and acidic residues; sequence KALIKQDNLDAFNERDPYKADD. Residues 378–391 are compositionally biased toward acidic residues; it reads SREEEEENDDDNSL. Phosphoserine is present on serine 788. A required for STRIPAK core complex formation region spans residues 796 to 837; the sequence is DNCLQSVLGQRVDLPEDFQMNYDLWLEREVFSKPISWEELLQ.

Belongs to the STRIP family. In terms of assembly, part of the core of STRIPAK complexes composed of PP2A catalytic and scaffolding subunits, the striatins (PP2A regulatory subunits), the striatin-associated proteins MOB4, STRIP1 and STRIP2, PDCD10 and members of the STE20 kinases, such as STK24 and STK26. The STRIPAK complex can be extended by adapter proteins such as SLMAP:SIKE1, CTTNBP2 or CTTNBP2NL. Interacts with CDC42BPB. Interacts with CTTNBP2NL.

The protein resides in the cytoplasm. Plays a role in the regulation of cell morphology and cytoskeletal organization. Required in the cortical actin filament dynamics and cell shape. Part of the striatin-interacting phosphatase and kinase (STRIPAK) complexes. STRIPAK complexes have critical roles in protein (de)phosphorylation and are regulators of multiple signaling pathways including Hippo, MAPK, nuclear receptor and cytoskeleton remodeling. Different types of STRIPAK complexes are involved in a variety of biological processes such as cell growth, differentiation, apoptosis, metabolism and immune regulation. The sequence is that of Striatin-interacting protein 1 from Homo sapiens (Human).